Reading from the N-terminus, the 695-residue chain is Nicastrin (695 aa).

Residues 1–22 form the signal peptide; the sequence is MEMRLNAASIWLLILSYGATIA. The Extracellular portion of the chain corresponds to 23–654; that stretch reads QGERTRDKMY…IFLRPSNVHQ (632 aa). N-linked (GlcNAc...) asparagine glycosylation is found at Asn45, Asn108, Asn116, Asn138, Asn381, Asn461, Asn489, Asn585, and Asn609. Residues 655–675 traverse the membrane as a helical segment; sequence VTTLSVGIVVLIISFCLVYII. The Cytoplasmic portion of the chain corresponds to 676–695; sequence SSRSEVLFEDLPASNAALFG.

This sequence belongs to the nicastrin family. As to quaternary structure, component of the gamma-secretase complex, a complex composed of a presenilin (Psn) homodimer, nicastrin (Nct), Aph-1 and Pen-2.

The protein resides in the membrane. Its function is as follows. Essential subunit of the gamma-secretase complex, an endoprotease complex that catalyzes the intramembrane cleavage of integral membrane proteins such as Notch. It probably represents a stabilizing cofactor required for the assembly of the gamma-secretase complex. The chain is Nicastrin from Drosophila melanogaster (Fruit fly).